Reading from the N-terminus, the 106-residue chain is uncharacterized protein (106 aa).

Residues 1-6 (MYQTSP) are Cytoplasmic-facing. The chain crosses the membrane as a helical span at residues 7–27 (LSLFYFQVLVPKFLECFLCFP). Over 28-32 (YHKIS) the chain is Extracellular. Residues 33–53 (LVALLSFFYCQLQTNMIILLS) form a helical membrane-spanning segment. Over 54 to 73 (QIKRFLYRQIMIALKIKAKK) the chain is Cytoplasmic. Residues 74 to 94 (FWFIFKYFNVSCDARLFNELF) traverse the membrane as a helical segment. At 95–106 (YIFQTYVSVDSK) the chain is on the extracellular side.

The protein resides in the membrane. This is an uncharacterized protein from Saccharomyces cerevisiae (strain ATCC 204508 / S288c) (Baker's yeast).